Consider the following 336-residue polypeptide: tRNA N6-adenosine threonylcarbamoyltransferase (336 aa).

Residues His114 and His118 each contribute to the Fe cation site. Substrate-binding positions include 136–140 (LVSGG), Asp169, Gly182, Asp186, and Asn275. Asp301 provides a ligand contact to Fe cation.

Belongs to the KAE1 / TsaD family. Fe(2+) is required as a cofactor.

It localises to the cytoplasm. The enzyme catalyses L-threonylcarbamoyladenylate + adenosine(37) in tRNA = N(6)-L-threonylcarbamoyladenosine(37) in tRNA + AMP + H(+). Functionally, required for the formation of a threonylcarbamoyl group on adenosine at position 37 (t(6)A37) in tRNAs that read codons beginning with adenine. Is involved in the transfer of the threonylcarbamoyl moiety of threonylcarbamoyl-AMP (TC-AMP) to the N6 group of A37, together with TsaE and TsaB. TsaD likely plays a direct catalytic role in this reaction. The polypeptide is tRNA N6-adenosine threonylcarbamoyltransferase (Streptococcus pneumoniae (strain CGSP14)).